The primary structure comprises 145 residues: D-aminoacyl-tRNA deacylase (145 aa).

The Gly-cisPro motif, important for rejection of L-amino acids signature appears at Gly-137–Pro-138.

Belongs to the DTD family. In terms of assembly, homodimer.

It is found in the cytoplasm. The enzyme catalyses glycyl-tRNA(Ala) + H2O = tRNA(Ala) + glycine + H(+). It catalyses the reaction a D-aminoacyl-tRNA + H2O = a tRNA + a D-alpha-amino acid + H(+). Its function is as follows. An aminoacyl-tRNA editing enzyme that deacylates mischarged D-aminoacyl-tRNAs. Also deacylates mischarged glycyl-tRNA(Ala), protecting cells against glycine mischarging by AlaRS. Acts via tRNA-based rather than protein-based catalysis; rejects L-amino acids rather than detecting D-amino acids in the active site. By recycling D-aminoacyl-tRNA to D-amino acids and free tRNA molecules, this enzyme counteracts the toxicity associated with the formation of D-aminoacyl-tRNA entities in vivo and helps enforce protein L-homochirality. The protein is D-aminoacyl-tRNA deacylase of Cereibacter sphaeroides (strain ATCC 17029 / ATH 2.4.9) (Rhodobacter sphaeroides).